The following is a 524-amino-acid chain: Vang-like protein 1 (524 aa).

Positions 1-15 (MDTESTYSGYSYYSS) are enriched in low complexity. The disordered stretch occupies residues 1–85 (MDTESTYSGY…TTAITGTSEH (85 aa)). Topologically, residues 1–117 (MDTESTYSGY…KRYLGLTVAS (117 aa)) are cytoplasmic. A compositionally biased stretch (polar residues) spans 73–85 (GETTTAITGTSEH). Residues Ser-86 and Ser-88 each carry the phosphoserine modification. A helical membrane pass occupies residues 118–138 (FLGLLVFLTPIAFILLPPILW). Over 139–151 (RDELEPCGTICEG) the chain is Extracellular. Residues 152–172 (LFISMAFKLLILLIGTWALFF) traverse the membrane as a helical segment. Residues 173–182 (RKRRADMPRV) are Cytoplasmic-facing. A helical membrane pass occupies residues 183–203 (FVFRALLLVLIFLFVVSYWLF). Topologically, residues 204–222 (YGVRILDSRDRNYQGIVQY) are extracellular. The helical transmembrane segment at 223–243 (AVSLVDALLFIHYLAIVLLEL) threads the bilayer. Residues 244 to 524 (RQLQPMFTLQ…VLRLQSETSV (281 aa)) are Cytoplasmic-facing.

Belongs to the Vang family. Heterodimer with VANGL2. Interacts through its C-terminal region with the N-terminal half of DVL1, DVL2 and DVL3. The PDZ domain of DVL1, DVL2 and DVL3 is required for the interaction. According to PubMed:11956595, ubiquitously expressed. According to PubMed:12011995, expressed specifically in testis and ovary.

Its subcellular location is the cell membrane. This is Vang-like protein 1 (VANGL1) from Homo sapiens (Human).